Here is a 410-residue protein sequence, read N- to C-terminus: Benzene 1,2-dioxygenase system ferredoxin--NAD(+) reductase subunit (410 aa).

4 to 35 (HVAIIGNGVAGFTTAQALRAEGYEGRISLIGE) is an FAD binding site. An NAD(+)-binding site is contributed by 145–173 (RLLIVGGGLIGCEVATTARKLGLSVTILE).

Belongs to the bacterial ring-hydroxylating dioxygenase ferredoxin reductase family. As to quaternary structure, this dioxygenase system consists of four proteins: the two subunits of the hydroxylase component (BedC1 and BedC2), a ferredoxin (BedB) and a ferredoxin reductase (BedA). FAD serves as cofactor.

It catalyses the reaction 2 reduced [2Fe-2S]-[ferredoxin] + NAD(+) + H(+) = 2 oxidized [2Fe-2S]-[ferredoxin] + NADH. It functions in the pathway aromatic compound metabolism; benzene degradation; catechol from benzene: step 1/2. Its function is as follows. Part of the electron transfer component of benzene 1,2-dioxygenase, transfers electrons from ferredoxin to NADH. This is Benzene 1,2-dioxygenase system ferredoxin--NAD(+) reductase subunit (bedA) from Pseudomonas putida (Arthrobacter siderocapsulatus).